A 428-amino-acid polypeptide reads, in one-letter code: Enolase (428 aa).

Q162 contacts (2R)-2-phosphoglycerate. The active-site Proton donor is the E204. 3 residues coordinate Mg(2+): D241, E283, and D310. Residues K335, R364, S365, and K386 each coordinate (2R)-2-phosphoglycerate. Catalysis depends on K335, which acts as the Proton acceptor.

This sequence belongs to the enolase family. Mg(2+) is required as a cofactor.

It is found in the cytoplasm. Its subcellular location is the secreted. The protein resides in the cell surface. It carries out the reaction (2R)-2-phosphoglycerate = phosphoenolpyruvate + H2O. It functions in the pathway carbohydrate degradation; glycolysis; pyruvate from D-glyceraldehyde 3-phosphate: step 4/5. In terms of biological role, catalyzes the reversible conversion of 2-phosphoglycerate (2-PG) into phosphoenolpyruvate (PEP). It is essential for the degradation of carbohydrates via glycolysis. This chain is Enolase, found in Rhodococcus erythropolis (strain PR4 / NBRC 100887).